Consider the following 209-residue polypeptide: Type III pantothenate kinase (209 aa).

5–12 (DIGNSNAN) is a binding site for ATP. Substrate contacts are provided by residues tyrosine 68 and 72–75 (GIDR). The Proton acceptor role is filled by aspartate 74. Residue aspartate 89 coordinates K(+). Residue serine 92 participates in ATP binding. Threonine 144 provides a ligand contact to substrate.

The protein belongs to the type III pantothenate kinase family. As to quaternary structure, homodimer. NH4(+) serves as cofactor. K(+) is required as a cofactor.

The protein resides in the cytoplasm. It catalyses the reaction (R)-pantothenate + ATP = (R)-4'-phosphopantothenate + ADP + H(+). It functions in the pathway cofactor biosynthesis; coenzyme A biosynthesis; CoA from (R)-pantothenate: step 1/5. In terms of biological role, catalyzes the phosphorylation of pantothenate (Pan), the first step in CoA biosynthesis. The sequence is that of Type III pantothenate kinase from Campylobacter jejuni (strain RM1221).